Here is a 223-residue protein sequence, read N- to C-terminus: Voltage-dependent calcium channel gamma-1 subunit (223 aa).

Over 1-10 (MSQTKTLKVR) the chain is Cytoplasmic. Residues 11-29 (VALLCILVGIVLALVAVVT) traverse the membrane as a helical segment. The Extracellular portion of the chain corresponds to 30-109 (DHWAVLSPHV…TQKEYSISAA (80 aa)). Residues N43 and N80 are each glycosylated (N-linked (GlcNAc...) asparagine). C57 and C81 are disulfide-bonded. Residues 110 to 130 (AIAIFSLGFIIVGTLCALLSF) form a helical membrane-spanning segment. Residues 131 to 135 (RKKRD) are Cytoplasmic-facing. Residues 136–156 (YLLRPASMFYIFAGLCLSVSA) traverse the membrane as a helical segment. The Extracellular segment spans residues 157–180 (EVMRQSVQRMVDSEHTAWIAHSLA). The helical transmembrane segment at 181 to 205 (WSFICACVAAALLLVGGLALLLLAL) threads the bilayer. At 206 to 223 (PRMPRDPWESCMDAEPEH) the chain is on the cytoplasmic side.

Belongs to the PMP-22/EMP/MP20 family. CACNG subfamily. As to quaternary structure, component of a calcium channel complex consisting of a pore-forming alpha subunit (CACNA1S) and the ancillary subunits CACNB1 or CACNB2, CACNG1 and CACNA2D1. The channel complex contains alpha, beta, gamma and delta subunits in a 1:1:1:1 ratio, i.e. it contains either CACNB1 or CACNB2. N-glycosylated.

Its subcellular location is the cell membrane. It localises to the sarcolemma. Regulatory subunit of the voltage-gated calcium channel that gives rise to L-type calcium currents in skeletal muscle. Regulates channel inactivation kinetics. The sequence is that of Voltage-dependent calcium channel gamma-1 subunit (CACNG1) from Bos taurus (Bovine).